Here is a 174-residue protein sequence, read N- to C-terminus: Gamma-crystallin D (174 aa).

Beta/gamma crystallin 'Greek key' domains lie at 2 to 40 (GKITFYEDRGFQGRHYECSTDHSNLQPYFSRCNSVRVDS) and 41 to 83 (GCWM…RLIP). The tract at residues 84-87 (HAGS) is connecting peptide. Beta/gamma crystallin 'Greek key' domains are found at residues 88 to 128 (HRIR…NVLE) and 129 to 171 (GCWV…RRVM).

This sequence belongs to the beta/gamma-crystallin family. In terms of tissue distribution, detected in the superior olivary complex of the auditory hindbrain.

In terms of biological role, crystallins are the dominant structural components of the vertebrate eye lens. This Mus musculus (Mouse) protein is Gamma-crystallin D (Crygd).